The sequence spans 1045 residues: Elongation factor 3 (1045 aa).

HEAT repeat units follow at residues 5 to 42 (DQSL…GNII), 43 to 85 (EHDI…PSVE), 86 to 123 (PFVI…AINP), 125 to 162 (AIKA…AAKE), 166 to 203 (LRMP…TVDN), 205 to 241 (DIER…EVTP), and 242 to 279 (ATLS…LVED). ADP-binding residues include isoleucine 42, histidine 44, and serine 83. 3 residues coordinate ADP: threonine 392, histidine 396, and glutamate 397. 2 ABC transporter domains span residues 426 to 641 (DEGE…YYEL) and 667 to 993 (VKVS…KKED). Positions 703, 922, 925, and 951 each coordinate ADP. Positions 974–1045 (SGHNWVSGQG…AYVSSDDEDF (72 aa)) are disordered. Residues 1007-1031 (GGKKKKKLSSAELRKKKKERMKKKK) are compositionally biased toward basic residues.

This sequence belongs to the ABC transporter superfamily. ABCF family. EF3 subfamily. As to quaternary structure, monomer.

Its subcellular location is the cytoplasm. The protein localises to the cytosol. The enzyme catalyses ATP + H2O = ADP + phosphate + H(+). The protein operates within protein biosynthesis; polypeptide chain elongation. Its function is as follows. Ribosome-dependent ATPase that functions in cytoplasmic translation elongation. Required for the ATP-dependent release of deacylated tRNA from the ribosomal E-site during protein biosynthesis. Stimulates the eEF1A-dependent binding of aminoacyl-tRNA to the ribosomal A-site, which has reduced affinity for tRNA as long as the E-site is occupied. Assists translation termination by stimulating the release of nascent protein from the ribosome by release factors. The polypeptide is Elongation factor 3 (TEF3) (Candida glabrata (strain ATCC 2001 / BCRC 20586 / JCM 3761 / NBRC 0622 / NRRL Y-65 / CBS 138) (Yeast)).